A 317-amino-acid chain; its full sequence is MTSIVFMGTPAFAAPILESLIKEQYQVLGVVTQPDRKVGRKHVLTASPVKEVAVAHDIPVFQPEKISGSPEMQQIIDLQPDLIVTAAFGQFLPTKLLKAAKIGAVNVHGSLLPKYRGGAPVQYSIINGESETGITIIYMVKKMDAGDMLAQRAIPIEKNDDTGTMFDKLSLVGRDLLLETLPKLIAGEITAVPQDESQVTFAPNIQPEQEVLDFFTKTAVEIDNQVRGMRPAPIAYAVLDGKRTKFWDVTPLADEVVTQAPGQVVRKTKHELVIAAADHTAIAINQLQPAGKPKMTITDYLNGAADKFATGEQVINK.

110 to 113 provides a ligand contact to (6S)-5,6,7,8-tetrahydrofolate; it reads SLLP.

Belongs to the Fmt family.

It catalyses the reaction L-methionyl-tRNA(fMet) + (6R)-10-formyltetrahydrofolate = N-formyl-L-methionyl-tRNA(fMet) + (6S)-5,6,7,8-tetrahydrofolate + H(+). Its function is as follows. Attaches a formyl group to the free amino group of methionyl-tRNA(fMet). The formyl group appears to play a dual role in the initiator identity of N-formylmethionyl-tRNA by promoting its recognition by IF2 and preventing the misappropriation of this tRNA by the elongation apparatus. This Lactiplantibacillus plantarum (strain ATCC BAA-793 / NCIMB 8826 / WCFS1) (Lactobacillus plantarum) protein is Methionyl-tRNA formyltransferase.